Reading from the N-terminus, the 1070-residue chain is Ubiquitin-protein ligase E3B (1070 aa).

Met-1 bears the N-acetylmethionine mark. The IQ domain occupies 29 to 58 (RERSAVTIQALVRSFLCRRRLHRDIRKEID). Ser-421 bears the Phosphoserine mark. The region spanning 704-1070 (SQHAMKGVIR…ISMNTGFELS (367 aa)) is the HECT domain. Cys-1038 functions as the Glycyl thioester intermediate in the catalytic mechanism.

In terms of tissue distribution, widely expressed. High expression is observed in developing central nervous system.

The protein localises to the postsynaptic density. The catalysed reaction is S-ubiquitinyl-[E2 ubiquitin-conjugating enzyme]-L-cysteine + [acceptor protein]-L-lysine = [E2 ubiquitin-conjugating enzyme]-L-cysteine + N(6)-ubiquitinyl-[acceptor protein]-L-lysine.. It functions in the pathway protein modification; protein ubiquitination. Functionally, E3 ubiquitin-protein ligase which accepts ubiquitin from an E2 ubiquitin-conjugating enzyme in the form of a thioester and then directly transfers the ubiquitin to targeted substrates. Ubiquitinates BCKDK and targets it for degradation, thereby regulating various metabolic processes. Involved in the positive regulation of neurite branching in hippocampal neurons and the control of neuronal spine number and morphology, through the ubiquitination of PPP3CC. The sequence is that of Ubiquitin-protein ligase E3B (Ube3b) from Mus musculus (Mouse).